A 554-amino-acid polypeptide reads, in one-letter code: Oxygen-dependent choline dehydrogenase (554 aa).

Position 4–33 (aspartate 4–glutamate 33) interacts with FAD. Histidine 473 (proton acceptor) is an active-site residue.

It belongs to the GMC oxidoreductase family. It depends on FAD as a cofactor.

The catalysed reaction is choline + A = betaine aldehyde + AH2. It carries out the reaction betaine aldehyde + NAD(+) + H2O = glycine betaine + NADH + 2 H(+). It functions in the pathway amine and polyamine biosynthesis; betaine biosynthesis via choline pathway; betaine aldehyde from choline (cytochrome c reductase route): step 1/1. In terms of biological role, involved in the biosynthesis of the osmoprotectant glycine betaine. Catalyzes the oxidation of choline to betaine aldehyde and betaine aldehyde to glycine betaine at the same rate. This is Oxygen-dependent choline dehydrogenase from Klebsiella pneumoniae (strain 342).